The following is a 215-amino-acid chain: Urease accessory protein UreE (215 aa).

A disordered region spans residues 134–215 (FDPEGGAYAP…HGHSHKHDHK (82 aa)). The segment covering 164–206 (GHHDHADHEHDHKHDHGKHDHAGHDHAHDHHVHDEHCGHDHGH) has biased composition (basic and acidic residues).

It belongs to the UreE family.

It localises to the cytoplasm. Involved in urease metallocenter assembly. Binds nickel. Probably functions as a nickel donor during metallocenter assembly. This is Urease accessory protein UreE from Rhodopseudomonas palustris (strain HaA2).